The following is a 429-amino-acid chain: Dual-specificity RNA methyltransferase RlmN (429 aa).

A disordered region spans residues 1–23 (MRAMQTHTEIAPMPIPGHVDPVP). Glutamate 128 (proton acceptor) is an active-site residue. The Radical SAM core domain occupies 134–397 (DADRGTLCVS…APVRTPRGRD (264 aa)). A disulfide bridge links cysteine 141 with cysteine 402. [4Fe-4S] cluster is bound by residues cysteine 148, cysteine 152, and cysteine 155. Residues 226–227 (GE), serine 258, 280–282 (SLH), and asparagine 359 each bind S-adenosyl-L-methionine. The active-site S-methylcysteine intermediate is the cysteine 402.

This sequence belongs to the radical SAM superfamily. RlmN family. [4Fe-4S] cluster serves as cofactor.

It localises to the cytoplasm. The catalysed reaction is adenosine(2503) in 23S rRNA + 2 reduced [2Fe-2S]-[ferredoxin] + 2 S-adenosyl-L-methionine = 2-methyladenosine(2503) in 23S rRNA + 5'-deoxyadenosine + L-methionine + 2 oxidized [2Fe-2S]-[ferredoxin] + S-adenosyl-L-homocysteine. It catalyses the reaction adenosine(37) in tRNA + 2 reduced [2Fe-2S]-[ferredoxin] + 2 S-adenosyl-L-methionine = 2-methyladenosine(37) in tRNA + 5'-deoxyadenosine + L-methionine + 2 oxidized [2Fe-2S]-[ferredoxin] + S-adenosyl-L-homocysteine. Its function is as follows. Specifically methylates position 2 of adenine 2503 in 23S rRNA and position 2 of adenine 37 in tRNAs. m2A2503 modification seems to play a crucial role in the proofreading step occurring at the peptidyl transferase center and thus would serve to optimize ribosomal fidelity. This chain is Dual-specificity RNA methyltransferase RlmN, found in Novosphingobium aromaticivorans (strain ATCC 700278 / DSM 12444 / CCUG 56034 / CIP 105152 / NBRC 16084 / F199).